Reading from the N-terminus, the 271-residue chain is Acetyl-coenzyme A carboxylase carboxyl transferase subunit beta (271 aa).

One can recognise a CoA carboxyltransferase N-terminal domain in the interval 21-271 (LWIQCPYCKQ…LGDLLALHTA (251 aa)). Positions 25, 28, 43, and 46 each coordinate Zn(2+). Residues 25–46 (CPYCKQGSYRESLGNAQVCPHC) form a C4-type zinc finger.

Belongs to the AccD/PCCB family. Acetyl-CoA carboxylase is a heterohexamer composed of biotin carboxyl carrier protein (AccB), biotin carboxylase (AccC) and two subunits each of ACCase subunit alpha (AccA) and ACCase subunit beta (AccD). The cofactor is Zn(2+).

Its subcellular location is the cytoplasm. It carries out the reaction N(6)-carboxybiotinyl-L-lysyl-[protein] + acetyl-CoA = N(6)-biotinyl-L-lysyl-[protein] + malonyl-CoA. The protein operates within lipid metabolism; malonyl-CoA biosynthesis; malonyl-CoA from acetyl-CoA: step 1/1. Its function is as follows. Component of the acetyl coenzyme A carboxylase (ACC) complex. Biotin carboxylase (BC) catalyzes the carboxylation of biotin on its carrier protein (BCCP) and then the CO(2) group is transferred by the transcarboxylase to acetyl-CoA to form malonyl-CoA. In Lacticaseibacillus casei (strain BL23) (Lactobacillus casei), this protein is Acetyl-coenzyme A carboxylase carboxyl transferase subunit beta.